Here is a 307-residue protein sequence, read N- to C-terminus: Aspartate carbamoyltransferase catalytic subunit (307 aa).

2 residues coordinate carbamoyl phosphate: Arg56 and Thr57. Position 84 (Lys84) interacts with L-aspartate. Residues Arg106, His136, and Gln139 each contribute to the carbamoyl phosphate site. Residues Arg169 and Arg221 each coordinate L-aspartate. The carbamoyl phosphate site is built by Ala262 and Pro263.

It belongs to the aspartate/ornithine carbamoyltransferase superfamily. ATCase family. As to quaternary structure, heterododecamer (2C3:3R2) of six catalytic PyrB chains organized as two trimers (C3), and six regulatory PyrI chains organized as three dimers (R2).

The enzyme catalyses carbamoyl phosphate + L-aspartate = N-carbamoyl-L-aspartate + phosphate + H(+). The protein operates within pyrimidine metabolism; UMP biosynthesis via de novo pathway; (S)-dihydroorotate from bicarbonate: step 2/3. In terms of biological role, catalyzes the condensation of carbamoyl phosphate and aspartate to form carbamoyl aspartate and inorganic phosphate, the committed step in the de novo pyrimidine nucleotide biosynthesis pathway. This chain is Aspartate carbamoyltransferase catalytic subunit, found in Streptococcus pneumoniae (strain P1031).